Reading from the N-terminus, the 418-residue chain is Probable cysteine desulfurase 2 (418 aa).

Lys-234 is modified (N6-(pyridoxal phosphate)lysine). Cys-374 acts as the Cysteine persulfide intermediate in catalysis.

This sequence belongs to the class-V pyridoxal-phosphate-dependent aminotransferase family. Csd subfamily. Requires pyridoxal 5'-phosphate as cofactor.

It catalyses the reaction (sulfur carrier)-H + L-cysteine = (sulfur carrier)-SH + L-alanine. Its function is as follows. Catalyzes the removal of elemental sulfur and selenium atoms from L-cysteine, L-cystine, L-selenocysteine, and L-selenocystine to produce L-alanine. The sequence is that of Probable cysteine desulfurase 2 (csd2) from Mycobacterium leprae (strain TN).